Consider the following 285-residue polypeptide: Bifunctional protein FolD (285 aa).

Residues 163 to 165 (GRS) and Ser-188 each bind NADP(+).

This sequence belongs to the tetrahydrofolate dehydrogenase/cyclohydrolase family. In terms of assembly, homodimer.

The enzyme catalyses (6R)-5,10-methylene-5,6,7,8-tetrahydrofolate + NADP(+) = (6R)-5,10-methenyltetrahydrofolate + NADPH. It catalyses the reaction (6R)-5,10-methenyltetrahydrofolate + H2O = (6R)-10-formyltetrahydrofolate + H(+). It participates in one-carbon metabolism; tetrahydrofolate interconversion. Functionally, catalyzes the oxidation of 5,10-methylenetetrahydrofolate to 5,10-methenyltetrahydrofolate and then the hydrolysis of 5,10-methenyltetrahydrofolate to 10-formyltetrahydrofolate. The polypeptide is Bifunctional protein FolD (Lactococcus lactis subsp. cremoris (strain MG1363)).